A 470-amino-acid polypeptide reads, in one-letter code: Glucose-1-phosphate adenylyltransferase (470 aa).

Residues Gly-165, 182 to 183 (EK), and Ser-200 contribute to the alpha-D-glucose 1-phosphate site.

The protein belongs to the bacterial/plant glucose-1-phosphate adenylyltransferase family. Homotetramer.

It catalyses the reaction alpha-D-glucose 1-phosphate + ATP + H(+) = ADP-alpha-D-glucose + diphosphate. It functions in the pathway glycan biosynthesis; glycogen biosynthesis. Functionally, involved in the biosynthesis of ADP-glucose, a building block required for the elongation reactions to produce glycogen. Catalyzes the reaction between ATP and alpha-D-glucose 1-phosphate (G1P) to produce pyrophosphate and ADP-Glc. This chain is Glucose-1-phosphate adenylyltransferase, found in Paenarthrobacter aurescens (strain TC1).